Here is a 263-residue protein sequence, read N- to C-terminus: L-histidine 2-aminobutanoyltransferase (263 aa).

It belongs to the methyltransferase superfamily. CntL family.

The catalysed reaction is L-histidine + S-adenosyl-L-methionine = (2S)-2-amino-4-{[(1S)-1-carboxy-2-(1H-imidazol-4-yl)ethyl]amino}butanoate + S-methyl-5'-thioadenosine + H(+). Functionally, catalyzes the nucleophilic attack of one alpha-aminobutanoate moiety from SAM onto L-histidine to produce the intermediate (2S)-2-amino-4-{[(1S)-1-carboxy-2-(1H-imidazol-4-yl)ethyl]amino}butanoate. Functions in the biosynthesis of the metallophore pseudopaline, which is involved in the acquisition of nickel and zinc, and thus enables bacterial growth inside the host, where metal access is limited. Therefore, this enzyme probably contributes to Pseudomonas virulence. Appears to be specific for L-histidine as substrate. The protein is L-histidine 2-aminobutanoyltransferase of Pseudomonas aeruginosa (strain ATCC 15692 / DSM 22644 / CIP 104116 / JCM 14847 / LMG 12228 / 1C / PRS 101 / PAO1).